The sequence spans 73 residues: Translation initiation factor IF-1 (73 aa).

Positions 1-72 (MAKDEIIEFE…SKGRITYRGK (72 aa)) constitute an S1-like domain.

The protein belongs to the IF-1 family. As to quaternary structure, component of the 30S ribosomal translation pre-initiation complex which assembles on the 30S ribosome in the order IF-2 and IF-3, IF-1 and N-formylmethionyl-tRNA(fMet); mRNA recruitment can occur at any time during PIC assembly.

It localises to the cytoplasm. Its function is as follows. One of the essential components for the initiation of protein synthesis. Stabilizes the binding of IF-2 and IF-3 on the 30S subunit to which N-formylmethionyl-tRNA(fMet) subsequently binds. Helps modulate mRNA selection, yielding the 30S pre-initiation complex (PIC). Upon addition of the 50S ribosomal subunit IF-1, IF-2 and IF-3 are released leaving the mature 70S translation initiation complex. In Psychrobacter arcticus (strain DSM 17307 / VKM B-2377 / 273-4), this protein is Translation initiation factor IF-1.